We begin with the raw amino-acid sequence, 354 residues long: Dual-specificity RNA methyltransferase RlmN (354 aa).

The active-site Proton acceptor is Glu89. The region spanning 106–339 (KEAKYTVCVS…CTIRKSKGMD (234 aa)) is the Radical SAM core domain. A disulfide bridge connects residues Cys113 and Cys344. [4Fe-4S] cluster is bound by residues Cys120, Cys124, and Cys127. S-adenosyl-L-methionine-binding positions include 170 to 171 (GE), Ser202, 225 to 227 (SLH), and Asn301. Cys344 acts as the S-methylcysteine intermediate in catalysis.

The protein belongs to the radical SAM superfamily. RlmN family. The cofactor is [4Fe-4S] cluster.

It localises to the cytoplasm. The enzyme catalyses adenosine(2503) in 23S rRNA + 2 reduced [2Fe-2S]-[ferredoxin] + 2 S-adenosyl-L-methionine = 2-methyladenosine(2503) in 23S rRNA + 5'-deoxyadenosine + L-methionine + 2 oxidized [2Fe-2S]-[ferredoxin] + S-adenosyl-L-homocysteine. It catalyses the reaction adenosine(37) in tRNA + 2 reduced [2Fe-2S]-[ferredoxin] + 2 S-adenosyl-L-methionine = 2-methyladenosine(37) in tRNA + 5'-deoxyadenosine + L-methionine + 2 oxidized [2Fe-2S]-[ferredoxin] + S-adenosyl-L-homocysteine. In terms of biological role, specifically methylates position 2 of adenine 2503 in 23S rRNA and position 2 of adenine 37 in tRNAs. m2A2503 modification seems to play a crucial role in the proofreading step occurring at the peptidyl transferase center and thus would serve to optimize ribosomal fidelity. This is Dual-specificity RNA methyltransferase RlmN from Nautilia profundicola (strain ATCC BAA-1463 / DSM 18972 / AmH).